A 254-amino-acid chain; its full sequence is Isoprenyl transferase (254 aa).

Asp24 is a catalytic residue. Asp24 serves as a coordination point for Mg(2+). Substrate is bound by residues 25 to 28 (GNGR), Trp29, Arg37, His41, and 69 to 71 (SSE). Asn72 (proton acceptor) is an active-site residue. Residues Trp73, Arg75, Arg192, and 198–200 (RIS) contribute to the substrate site. Glu211 is a binding site for Mg(2+).

This sequence belongs to the UPP synthase family. As to quaternary structure, homodimer. The cofactor is Mg(2+).

Catalyzes the condensation of isopentenyl diphosphate (IPP) with allylic pyrophosphates generating different type of terpenoids. The polypeptide is Isoprenyl transferase (Bordetella parapertussis (strain 12822 / ATCC BAA-587 / NCTC 13253)).